We begin with the raw amino-acid sequence, 516 residues long: Thioredoxin reductase 2, mitochondrial (516 aa).

Asp-62–Cys-79 contacts FAD. The cysteines at positions 79 and 84 are disulfide-linked. His-489 functions as the Proton acceptor in the catalytic mechanism.

The protein belongs to the class-I pyridine nucleotide-disulfide oxidoreductase family. Homodimer. FAD serves as cofactor.

It localises to the mitochondrion. It carries out the reaction [thioredoxin]-dithiol + NADP(+) = [thioredoxin]-disulfide + NADPH + H(+). Its function is as follows. Thioredoxin system is a major player in glutathione metabolism, due to the demonstrated absence of a glutathione reductase. Functionally interacts with the Sod/Cat reactive oxidation species (ROS) defense system and thereby has a role in preadult development and life span. Lack of a glutathione reductase suggests antioxidant defense in Drosophila, and probably in related insects, differs fundamentally from that in other organisms. The sequence is that of Thioredoxin reductase 2, mitochondrial from Drosophila melanogaster (Fruit fly).